The sequence spans 724 residues: MSLFGTSPEDSSAGNSAHRSKSSLFADEPSLGTGSNANLGSSSLFADDDDLSSGSPWNSNVNKRTARHKLVKTLLSDSDAPESYIDAYDLVLSAGDRVGAGIGLTSVREILSGSGISASDQEKILNIVVSGDIDSANGLGRGEFNVLLALVGLAQEGEDLTLDAVDDRRKKLPAPKSLYLDALRANQESGTPAPSQERPITPPRPASPQQAPNSAHSRRESMTGLESDPWGSPELHRGHAHAQLESDHPVLNGYGSVRSATNAWSSRVGEDNNPNEISNSNRANSQTDSAPSHGSGFGWGESLGNTPSDGGLGGTARAGLGGFGPPSSVHSDSNPRRRSLGIGRVASPPVEEHVTVTLLPEKEGMFMFQHRNYEVKSARRGSTVVRRYSDFVWLLDCLQKRYPFRQLPLLPPKRLSADSNAFLEKRRRGLVRFTNALVRHPVLSQEQLVIMFLTVPTELSVWRKQATISVQDEFTGRDLPPDLEDSLPSTLPDTFETVRGGVKRSAEIYINLCTLLERLAKRNEGLAADHLRFSLALQSLTEVTRDTYAIDTNDVPLLNEGIRATANHLSVSQSLLEDEARAWEEGVLEDLKRQRDCLVSVREMFDRRDRYARNNIPQLERRIENNERKLQDLRSRPQGTVKPGEIEKVEDAIIKDKESIVQQHARGVFIKECIRDEIVYFQQSQYHISRLHQEWSQERVKYAELQADNWRSLSDQVESMPLSG.

Residues 1 to 17 (MSLFGTSPEDSSAGNSA) are compositionally biased toward polar residues. Disordered stretches follow at residues 1-39 (MSLF…NANL), 176-242 (KSLY…HAHA), and 265-342 (SSRV…SLGI). The span at 272–292 (NNPNEISNSNRANSQTDSAPS) shows a compositional bias: polar residues. The span at 310–324 (GGLGGTARAGLGGFG) shows a compositional bias: gly residues. Residues 351 to 459 (EEHVTVTLLP…IMFLTVPTEL (109 aa)) enclose the PX domain. A 1,2-diacyl-sn-glycero-3-phospho-(1D-myo-inositol-3-phosphate) contacts are provided by Arg-387, Ser-389, Lys-413, and Arg-426.

Belongs to the sorting nexin family.

Its subcellular location is the cytoplasm. It localises to the membrane. Functionally, required for vacuolar protein sorting. In Aspergillus oryzae (strain ATCC 42149 / RIB 40) (Yellow koji mold), this protein is Sorting nexin mvp1 (mvp1).